A 372-amino-acid polypeptide reads, in one-letter code: Cobalt-precorrin-5B C(1)-methyltransferase (372 aa).

The protein belongs to the CbiD family.

The catalysed reaction is Co-precorrin-5B + S-adenosyl-L-methionine = Co-precorrin-6A + S-adenosyl-L-homocysteine. Its pathway is cofactor biosynthesis; adenosylcobalamin biosynthesis; cob(II)yrinate a,c-diamide from sirohydrochlorin (anaerobic route): step 6/10. Catalyzes the methylation of C-1 in cobalt-precorrin-5B to form cobalt-precorrin-6A. The polypeptide is Cobalt-precorrin-5B C(1)-methyltransferase (Prochlorococcus marinus subsp. pastoris (strain CCMP1986 / NIES-2087 / MED4)).